A 412-amino-acid polypeptide reads, in one-letter code: Inositol polyphosphate-5-phosphatase A (412 aa).

C409 carries the S-farnesyl cysteine lipid modification. Residues 410–412 (VVQ) constitute a propeptide, removed in mature form.

It belongs to the inositol 1,4,5-trisphosphate 5-phosphatase type I family. In terms of assembly, interacts with TASOR. Post-translationally, isoprenylation at Cys-409 is required for localization at the membrane. Expressed at high levels in cerebellar Purkinje cells (at protein level). Expressed in Sertoli cells of the testis.

The protein resides in the cell membrane. Its subcellular location is the cell projection. It localises to the dendrite. It carries out the reaction 1D-myo-inositol 1,4,5-trisphosphate + H2O = 1D-myo-inositol 1,4-bisphosphate + phosphate. The enzyme catalyses 1D-myo-inositol 1,3,4,5-tetrakisphosphate + H2O = 1D-myo-inositol 1,3,4-trisphosphate + phosphate. In terms of biological role, phosphatase that specifically hydrolyzes the 5-phosphate of inositol 1,4,5-trisphosphate to inositol 1,4-bisphosphate, and inositol 1,3,4,5-tetrasphosphate to inositol 1,3,4-trisphosphate. Plays a crucial role in the survival of cerebellar Purkinje cells. The protein is Inositol polyphosphate-5-phosphatase A (Inpp5a) of Mus musculus (Mouse).